A 183-amino-acid chain; its full sequence is Small ribosomal subunit protein uS4 (183 aa).

The S4 RNA-binding domain maps to arginine 106–histidine 168.

Belongs to the universal ribosomal protein uS4 family. Part of the 30S ribosomal subunit. Contacts protein S5. The interaction surface between S4 and S5 is involved in control of translational fidelity.

Functionally, one of the primary rRNA binding proteins, it binds directly to 16S rRNA where it nucleates assembly of the body of the 30S subunit. With S5 and S12 plays an important role in translational accuracy. This Methanothrix thermoacetophila (strain DSM 6194 / JCM 14653 / NBRC 101360 / PT) (Methanosaeta thermophila) protein is Small ribosomal subunit protein uS4.